A 357-amino-acid chain; its full sequence is Glycerol-1-phosphate dehydrogenase [NAD(P)+] (357 aa).

NAD(+) is bound by residues 104–108 (GKTID) and 126–129 (TAAS). D131 is a binding site for substrate. S135 contacts NAD(+). D178 serves as a coordination point for substrate. Zn(2+) is bound by residues D178 and H258. Substrate is bound at residue H262. Residue H274 participates in Zn(2+) binding.

The protein belongs to the glycerol-1-phosphate dehydrogenase family. Requires Zn(2+) as cofactor.

It is found in the cytoplasm. It catalyses the reaction sn-glycerol 1-phosphate + NAD(+) = dihydroxyacetone phosphate + NADH + H(+). The enzyme catalyses sn-glycerol 1-phosphate + NADP(+) = dihydroxyacetone phosphate + NADPH + H(+). It functions in the pathway membrane lipid metabolism; glycerophospholipid metabolism. In terms of biological role, catalyzes the NAD(P)H-dependent reduction of dihydroxyacetonephosphate (DHAP or glycerone phosphate) to glycerol 1-phosphate (G1P). The G1P thus generated is used as the glycerophosphate backbone of phospholipids in the cellular membranes of Archaea. The sequence is that of Glycerol-1-phosphate dehydrogenase [NAD(P)+] from Methanococcoides burtonii (strain DSM 6242 / NBRC 107633 / OCM 468 / ACE-M).